Consider the following 267-residue polypeptide: Tryptophan 2,3-dioxygenase (267 aa).

Residues 44–48 and Arg-114 contribute to the substrate site; that span reads FITIH. His-225 is a heme binding site. Thr-239 serves as a coordination point for substrate.

This sequence belongs to the tryptophan 2,3-dioxygenase family. In terms of assembly, homotetramer. Requires heme as cofactor.

It catalyses the reaction L-tryptophan + O2 = N-formyl-L-kynurenine. The protein operates within amino-acid degradation; L-tryptophan degradation via kynurenine pathway; L-kynurenine from L-tryptophan: step 1/2. Functionally, heme-dependent dioxygenase that catalyzes the oxidative cleavage of the L-tryptophan (L-Trp) pyrrole ring and converts L-tryptophan to N-formyl-L-kynurenine. Catalyzes the oxidative cleavage of the indole moiety. This Nocardioides sp. (strain ATCC BAA-499 / JS614) protein is Tryptophan 2,3-dioxygenase.